Here is a 64-residue protein sequence, read N- to C-terminus: Disintegrin VB7A (64 aa).

The Disintegrin domain occupies 1–64 (NSGNPCCDPV…SDCPRNPYKD (64 aa)). 4 cysteine pairs are disulfide-bonded: cysteine 6–cysteine 29, cysteine 20–cysteine 26, cysteine 25–cysteine 50, and cysteine 38–cysteine 57. A Cell attachment site motif is present at residues 42-44 (RGD).

The protein belongs to the disintegrin family. Dimeric disintegrin subfamily. As to quaternary structure, heterodimer with VB7B; disulfide-linked. As to expression, expressed by the venom gland.

Its subcellular location is the secreted. Functionally, poor inhibitor of platelet aggregation. The disintegrin inhibits the adhesion of cells expressing the RGD-dependent integrin alpha-5/beta-1 (ITGA5/ITGB1) to immobilized fibronectin. Inhibition on alpha-2b/beta-3 (ITGA2B/ITGB3) is low. The sequence is that of Disintegrin VB7A from Vipera berus berus (Common viper).